Consider the following 625-residue polypeptide: Threonine--tRNA ligase (625 aa).

The segment at 1–147 (MRMLLIHSDY…TIVPEEAKVE (147 aa)) is editing domain. Positions 206-505 (PHVRLMLEHE…MQEGKKPMFP (300 aa)) are catalytic. Cys-298, His-350, and His-474 together coordinate Zn(2+).

Belongs to the class-II aminoacyl-tRNA synthetase family. As to quaternary structure, homodimer. The cofactor is Zn(2+).

It is found in the cytoplasm. It carries out the reaction tRNA(Thr) + L-threonine + ATP = L-threonyl-tRNA(Thr) + AMP + diphosphate + H(+). Its function is as follows. Catalyzes the attachment of threonine to tRNA(Thr) in a two-step reaction: L-threonine is first activated by ATP to form Thr-AMP and then transferred to the acceptor end of tRNA(Thr). Also edits incorrectly charged L-seryl-tRNA(Thr). The protein is Threonine--tRNA ligase of Pyrococcus furiosus (strain ATCC 43587 / DSM 3638 / JCM 8422 / Vc1).